The following is a 359-amino-acid chain: Peptide chain release factor 1 (359 aa).

The residue at position 236 (Gln236) is an N5-methylglutamine. The interval 286–305 (KKEMERSTMRKSQIGSGDRS) is disordered.

Belongs to the prokaryotic/mitochondrial release factor family. Methylated by PrmC. Methylation increases the termination efficiency of RF1.

The protein localises to the cytoplasm. Peptide chain release factor 1 directs the termination of translation in response to the peptide chain termination codons UAG and UAA. This chain is Peptide chain release factor 1, found in Wolbachia pipientis wMel.